The chain runs to 338 residues: 4-hydroxy-2-oxovalerate aldolase (338 aa).

Residues I6–M256 enclose the Pyruvate carboxyltransferase domain. Substrate is bound at residue R14 to D15. D15 lines the Mn(2+) pocket. H18 serves as the catalytic Proton acceptor. Positions 168 and 195 each coordinate substrate. Mn(2+) is bound by residues H195 and H197. Substrate is bound at residue Y286.

The protein belongs to the 4-hydroxy-2-oxovalerate aldolase family.

The catalysed reaction is (S)-4-hydroxy-2-oxopentanoate = acetaldehyde + pyruvate. The polypeptide is 4-hydroxy-2-oxovalerate aldolase (Moorella thermoacetica (strain ATCC 39073 / JCM 9320)).